Here is a 1073-residue protein sequence, read N- to C-terminus: Probable lipase MIL1 (1073 aa).

Disordered regions lie at residues 1 to 151 and 163 to 190; these read MSDS…AVSS and LTSK…KSVN. Basic and acidic residues-rich tracts occupy residues 54–81 and 101–121; these read QAKE…EAGK and GIDR…HDTD. The short motif at 143–147 is the APM2-interacting WQEMP motif element; that stretch reads WQEMP. Residues Asn190, Asn229, and Asn236 are each glycosylated (N-linked (GlcNAc...) asparagine). A disordered region spans residues 230–267; the sequence is SSQTSVNLTSSPSTTSLNNEKNNDDDDDDSYDEYEDDV. The segment covering 233–249 has biased composition (low complexity); that stretch reads TSVNLTSSPSTTSLNNE. The span at 252–267 shows a compositional bias: acidic residues; the sequence is NDDDDDDSYDEYEDDV. A glycan (N-linked (GlcNAc...) asparagine) is linked at Asn280. Residues 292-312 traverse the membrane as a helical segment; the sequence is FAYVGAINILANQMCTNLATL. Positions 385–448 are disordered; the sequence is NPWENDRDHE…SDVPGKVLDP (64 aa). The segment covering 404-427 has biased composition (polar residues); sequence RMSPNEQNGSVQASTPDPEQSATP. An N-linked (GlcNAc...) asparagine glycan is attached at Asn411. The residue at position 435 (Ser435) is a Phosphoserine. A helical membrane pass occupies residues 457–477; the sequence is LNIDVAWTIICDLFLICLQSS. N-linked (GlcNAc...) asparagine glycosylation occurs at Asn495. The next 2 helical transmembrane spans lie at 553-573 and 577-597; these read LVLG…IAAG and IGIT…VVAV. Residue Asn726 is glycosylated (N-linked (GlcNAc...) asparagine). A helical membrane pass occupies residues 818–838; the sequence is WFLAYLFRAAAGGFSAVMGIS. N-linked (GlcNAc...) asparagine glycosylation occurs at Asn850. 2 disordered regions span residues 942–968 and 1010–1073; these read GRDM…EGIA and KEVE…PDDI. Residues 1027–1037 show a composition bias toward pro residues; the sequence is PSTPKINPPQS. Ser1037 carries the post-translational modification Phosphoserine.

It belongs to the TMCO4 family. Interacts with RPP0. Interacts with APM2.

It localises to the golgi apparatus membrane. It is found in the early endosome membrane. Its subcellular location is the cytoplasmic vesicle. The protein localises to the clathrin-coated vesicle membrane. Functionally, probable lipase that recruits the AP-1-related (AP-1R) complex to membranes via interaction with APM2. The AP-1R complex is an adapter protein complex that mediates of cargo protein SNC1 sorting in clathrin-coated vesicles. The protein is Probable lipase MIL1 of Saccharomyces cerevisiae (strain ATCC 204508 / S288c) (Baker's yeast).